Reading from the N-terminus, the 436-residue chain is 3-ketoacyl-CoA thiolase (436 aa).

The Acyl-thioester intermediate role is filled by Cys-99. Active-site proton acceptor residues include His-392 and Cys-422.

This sequence belongs to the thiolase-like superfamily. Thiolase family. In terms of assembly, heterotetramer of two alpha chains (FadJ) and two beta chains (FadI).

Its subcellular location is the cytoplasm. It carries out the reaction an acyl-CoA + acetyl-CoA = a 3-oxoacyl-CoA + CoA. Its pathway is lipid metabolism; fatty acid beta-oxidation. Catalyzes the final step of fatty acid oxidation in which acetyl-CoA is released and the CoA ester of a fatty acid two carbons shorter is formed. The sequence is that of 3-ketoacyl-CoA thiolase from Shewanella halifaxensis (strain HAW-EB4).